The primary structure comprises 119 residues: Large ribosomal subunit protein bL20 (119 aa).

Belongs to the bacterial ribosomal protein bL20 family.

Binds directly to 23S ribosomal RNA and is necessary for the in vitro assembly process of the 50S ribosomal subunit. It is not involved in the protein synthesizing functions of that subunit. The polypeptide is Large ribosomal subunit protein bL20 (Bradyrhizobium sp. (strain BTAi1 / ATCC BAA-1182)).